The sequence spans 307 residues: HPr kinase/phosphorylase (307 aa).

Catalysis depends on residues His136 and Lys157. Residue 151-158 (GESGIGKS) participates in ATP binding. Ser158 provides a ligand contact to Mg(2+). Asp175 functions as the Proton acceptor; for phosphorylation activity. Proton donor; for dephosphorylation activity in the catalytic mechanism. The segment at 198–207 (LEVRGMGIID) is important for the catalytic mechanism of both phosphorylation and dephosphorylation. A Mg(2+)-binding site is contributed by Glu199. The active site involves Arg240. The important for the catalytic mechanism of dephosphorylation stretch occupies residues 261–266 (PIRPGR).

The protein belongs to the HPrK/P family. Homohexamer. Mg(2+) serves as cofactor.

It catalyses the reaction [HPr protein]-L-serine + ATP = [HPr protein]-O-phospho-L-serine + ADP + H(+). The enzyme catalyses [HPr protein]-O-phospho-L-serine + phosphate + H(+) = [HPr protein]-L-serine + diphosphate. Catalyzes the ATP- as well as the pyrophosphate-dependent phosphorylation of a specific serine residue in HPr, a phosphocarrier protein of the phosphoenolpyruvate-dependent sugar phosphotransferase system (PTS). HprK/P also catalyzes the pyrophosphate-producing, inorganic phosphate-dependent dephosphorylation (phosphorolysis) of seryl-phosphorylated HPr (P-Ser-HPr). The two antagonistic activities of HprK/P are regulated by several intracellular metabolites, which change their concentration in response to the absence or presence of rapidly metabolisable carbon sources (glucose, fructose, etc.) in the growth medium. Therefore, by controlling the phosphorylation state of HPr, HPrK/P is a sensor enzyme that plays a major role in the regulation of carbon metabolism and sugar transport: it mediates carbon catabolite repression (CCR), and regulates PTS-catalyzed carbohydrate uptake and inducer exclusion. The chain is HPr kinase/phosphorylase from Clostridium perfringens (strain ATCC 13124 / DSM 756 / JCM 1290 / NCIMB 6125 / NCTC 8237 / Type A).